Reading from the N-terminus, the 198-residue chain is Segregation and condensation protein B (198 aa).

The disordered stretch occupies residues 167-198 (PKLADPEAEDPDQSEMDLFFDRFNQSKEQEEE). Residues 172 to 181 (PEAEDPDQSE) show a composition bias toward acidic residues.

Belongs to the ScpB family. In terms of assembly, homodimer. Homodimerization may be required to stabilize the binding of ScpA to the Smc head domains. Component of a cohesin-like complex composed of ScpA, ScpB and the Smc homodimer, in which ScpA and ScpB bind to the head domain of Smc. The presence of the three proteins is required for the association of the complex with DNA.

It localises to the cytoplasm. Participates in chromosomal partition during cell division. May act via the formation of a condensin-like complex containing Smc and ScpA that pull DNA away from mid-cell into both cell halves. This chain is Segregation and condensation protein B, found in Listeria innocua serovar 6a (strain ATCC BAA-680 / CLIP 11262).